The following is a 329-amino-acid chain: Indolepyruvate C-methyltransferase (329 aa).

It belongs to the methyltransferase superfamily.

The catalysed reaction is indole-3-pyruvate + S-adenosyl-L-methionine = (R)-3-(indol-3-yl)-2-oxobutanoate + S-adenosyl-L-homocysteine + H(+). Strongly inhibited by the thiol reagents p-chloromercuribenzoate and N-ethylmaleimide. Partially inhibited by o-phenanthroline and 2,2'-dipyridyl. Competitively inhibited by L-tryptophan and indolmycin. Involved in the biosynthesis of the antibiotic indolmycin, an inhibitor of the bacterial tryptophan-tRNA synthetases. Catalyzes the transfer of a methyl group from S-adenosyl-L-methionine to position 3 of the aliphatic side chain of (indol-3-yl)pyruvate to yield 3-methylindolepyruvate. This chain is Indolepyruvate C-methyltransferase, found in Streptomyces griseus.